Reading from the N-terminus, the 1060-residue chain is Bumetanide-sensitive sodium-(potassium)-chloride cotransporter (1060 aa).

Residues 1 to 122 (MNDENRFNVS…KSPTPAVGIK (122 aa)) are Cytoplasmic-facing. 2 consecutive transmembrane segments (helical) span residues 123–143 (LGWI…VMLF) and 154–174 (GIGL…ITTL). Over 175–197 (SMSAICTNGEVKGGGIYYIISRS) the chain is Cytoplasmic. 2 helical membrane-spanning segments follow: residues 198-218 (LGPE…AVAA) and 250-270 (IVGT…MDWE). The Cytoplasmic segment spans residues 271-275 (SKAQN). 2 helical membrane passes run 276–296 (FLIA…IMGP) and 332–352 (FFSV…GANI). At 353–367 (SGDLKDPASAIPKGT) the chain is on the cytoplasmic side. A helical membrane pass occupies residues 368 to 388 (LLALLISMVSYTLMVLFAGGG). Residues Asn396, Asn404, and Asn419 are each glycosylated (N-linked (GlcNAc...) asparagine). A helical transmembrane segment spans residues 432 to 452 (VMQLMSAWGPFIYGGCWAATL). At 453 to 497 (STALTNLLSVPRLIQALGVDRIYPGLIFFSKPYGRHGEPYRGYVL) the chain is on the cytoplasmic side. Helical transmembrane passes span 498 to 518 (TFFV…APLI) and 563 to 583 (CVAI…AIFF). Over 584 to 642 (TLYLIVHYRRPDVNWGSSTQAQMYKTALSSAHALARTGEHVKNYWPQLLVLAGRPQARP) the chain is Cytoplasmic. The chain crosses the membrane as a helical span at residues 643–663 (ALVDLGNLISKAGSLMIVGDI). N-linked (GlcNAc...) asparagine glycosylation is present at Asn816. A helical transmembrane segment spans residues 882-902 (TLDVWWLYDDGGLTILLPYII). Residues 903–1060 (SQRSAWANCK…NHTSVLTFYS (158 aa)) are Cytoplasmic-facing.

This sequence belongs to the SLC12A transporter family.

It localises to the membrane. Its function is as follows. Electrically silent transporter system. Mediates sodium and chloride reabsorption. Plays a vital role in the regulation of ionic balance and cell volume. This chain is Bumetanide-sensitive sodium-(potassium)-chloride cotransporter, found in Manduca sexta (Tobacco hawkmoth).